Reading from the N-terminus, the 78-residue chain is Large ribosomal subunit protein eL20 (78 aa).

It belongs to the eukaryotic ribosomal protein eL20 family. In terms of assembly, part of the 50S ribosomal subunit. Binds 23S rRNA.

The chain is Large ribosomal subunit protein eL20 from Nanoarchaeum equitans (strain Kin4-M).